Reading from the N-terminus, the 567-residue chain is Mitogen-activated protein kinase 16 (567 aa).

In terms of domain architecture, Protein kinase spans 25 to 316; it reads YRIEEVIGKG…AEEALADVYF (292 aa). ATP contacts are provided by residues 31–39 and Lys-54; that span reads IGKGSYGVV. Asp-151 serves as the catalytic Proton acceptor. Thr-187 is modified (phosphothreonine). The TXY signature appears at 187-189; it reads TDY. Tyr-189 bears the Phosphotyrosine mark. Phosphothreonine is present on Thr-192. Disordered regions lie at residues 428–455 and 512–567; these read AQQS…ADRN and PAAA…SRWY. Basic and acidic residues predominate over residues 443–453; the sequence is SIRDERPRGAD. A compositionally biased stretch (polar residues) spans 545–567; it reads KPNTQYIPQKVSAAQDTAMSRWY.

This sequence belongs to the protein kinase superfamily. CMGC Ser/Thr protein kinase family. MAP kinase subfamily. Dually phosphorylated on Thr-187 and Tyr-189, which activates the enzyme.

It carries out the reaction L-seryl-[protein] + ATP = O-phospho-L-seryl-[protein] + ADP + H(+). It catalyses the reaction L-threonyl-[protein] + ATP = O-phospho-L-threonyl-[protein] + ADP + H(+). Its activity is regulated as follows. Activated by threonine and tyrosine phosphorylation. In Arabidopsis thaliana (Mouse-ear cress), this protein is Mitogen-activated protein kinase 16 (MPK16).